The primary structure comprises 363 residues: tRNA-specific 2-thiouridylase MnmA (363 aa).

ATP-binding positions include 8–15 and Leu34; that span reads AMSGGVDS. Catalysis depends on Cys103, which acts as the Nucleophile. Cys103 and Cys195 are oxidised to a cystine. An ATP-binding site is contributed by Gly127. Positions 145–147 are interaction with tRNA; the sequence is KDQ. The active-site Cysteine persulfide intermediate is Cys195.

This sequence belongs to the MnmA/TRMU family.

Its subcellular location is the cytoplasm. The catalysed reaction is S-sulfanyl-L-cysteinyl-[protein] + uridine(34) in tRNA + AH2 + ATP = 2-thiouridine(34) in tRNA + L-cysteinyl-[protein] + A + AMP + diphosphate + H(+). In terms of biological role, catalyzes the 2-thiolation of uridine at the wobble position (U34) of tRNA, leading to the formation of s(2)U34. This chain is tRNA-specific 2-thiouridylase MnmA, found in Thermobifida fusca (strain YX).